The chain runs to 372 residues: UDP-N-acetylglucosamine--N-acetylmuramyl-(pentapeptide) pyrophosphoryl-undecaprenol N-acetylglucosamine transferase (372 aa).

UDP-N-acetyl-alpha-D-glucosamine-binding positions include 10-12, Asn-124, Arg-166, Ser-196, Ile-256, and Gln-301; that span reads TGG.

Belongs to the glycosyltransferase 28 family. MurG subfamily.

The protein resides in the cell membrane. It carries out the reaction di-trans,octa-cis-undecaprenyl diphospho-N-acetyl-alpha-D-muramoyl-L-alanyl-D-glutamyl-meso-2,6-diaminopimeloyl-D-alanyl-D-alanine + UDP-N-acetyl-alpha-D-glucosamine = di-trans,octa-cis-undecaprenyl diphospho-[N-acetyl-alpha-D-glucosaminyl-(1-&gt;4)]-N-acetyl-alpha-D-muramoyl-L-alanyl-D-glutamyl-meso-2,6-diaminopimeloyl-D-alanyl-D-alanine + UDP + H(+). The protein operates within cell wall biogenesis; peptidoglycan biosynthesis. In terms of biological role, cell wall formation. Catalyzes the transfer of a GlcNAc subunit on undecaprenyl-pyrophosphoryl-MurNAc-pentapeptide (lipid intermediate I) to form undecaprenyl-pyrophosphoryl-MurNAc-(pentapeptide)GlcNAc (lipid intermediate II). The sequence is that of UDP-N-acetylglucosamine--N-acetylmuramyl-(pentapeptide) pyrophosphoryl-undecaprenol N-acetylglucosamine transferase from Desulforamulus reducens (strain ATCC BAA-1160 / DSM 100696 / MI-1) (Desulfotomaculum reducens).